Reading from the N-terminus, the 673-residue chain is eEF1A lysine and N-terminal methyltransferase homolog (673 aa).

It belongs to the methyltransferase superfamily.

It carries out the reaction L-lysyl-[protein] + S-adenosyl-L-methionine = N(6)-methyl-L-lysyl-[protein] + S-adenosyl-L-homocysteine + H(+). It catalyses the reaction N(6)-methyl-L-lysyl-[protein] + S-adenosyl-L-methionine = N(6),N(6)-dimethyl-L-lysyl-[protein] + S-adenosyl-L-homocysteine + H(+). The enzyme catalyses N-terminal glycyl-L-lysyl-L-glutamyl-[protein] + 3 S-adenosyl-L-methionine = N-terminal N,N,N-trimethyl-glycyl-L-lysyl-L-glutamyl-[protein] + 3 S-adenosyl-L-homocysteine + 3 H(+). Functionally, dual methyltransferase. It catalyzes N-terminal methylation of target proteins via its C-terminus. It catalyzes dimethylation on lysine residues of target proteins via its N-terminus. This chain is eEF1A lysine and N-terminal methyltransferase homolog, found in Drosophila melanogaster (Fruit fly).